The primary structure comprises 336 residues: Anthranilate phosphoribosyltransferase (336 aa).

5-phospho-alpha-D-ribose 1-diphosphate contacts are provided by residues G82, 85-86 (GD), T90, 92-95 (NIST), 110-118 (KHGNRFASG), and S122. Residue G82 participates in anthranilate binding. S94 contributes to the Mg(2+) binding site. Residue N113 participates in anthranilate binding. An anthranilate-binding site is contributed by R168. Mg(2+)-binding residues include D227 and E228.

Belongs to the anthranilate phosphoribosyltransferase family. In terms of assembly, homodimer. Mg(2+) serves as cofactor.

The enzyme catalyses N-(5-phospho-beta-D-ribosyl)anthranilate + diphosphate = 5-phospho-alpha-D-ribose 1-diphosphate + anthranilate. It participates in amino-acid biosynthesis; L-tryptophan biosynthesis; L-tryptophan from chorismate: step 2/5. Functionally, catalyzes the transfer of the phosphoribosyl group of 5-phosphorylribose-1-pyrophosphate (PRPP) to anthranilate to yield N-(5'-phosphoribosyl)-anthranilate (PRA). This chain is Anthranilate phosphoribosyltransferase, found in Desulfitobacterium hafniense (strain Y51).